The primary structure comprises 366 residues: tRNA/tmRNA (uracil-C(5))-methyltransferase (366 aa).

S-adenosyl-L-methionine is bound by residues Gln190, Tyr218, Asn223, Glu239, and Asp299. The Nucleophile role is filled by Cys324. Glu358 acts as the Proton acceptor in catalysis.

This sequence belongs to the class I-like SAM-binding methyltransferase superfamily. RNA M5U methyltransferase family. TrmA subfamily.

The enzyme catalyses uridine(54) in tRNA + S-adenosyl-L-methionine = 5-methyluridine(54) in tRNA + S-adenosyl-L-homocysteine + H(+). It carries out the reaction uridine(341) in tmRNA + S-adenosyl-L-methionine = 5-methyluridine(341) in tmRNA + S-adenosyl-L-homocysteine + H(+). Functionally, dual-specificity methyltransferase that catalyzes the formation of 5-methyluridine at position 54 (m5U54) in all tRNAs, and that of position 341 (m5U341) in tmRNA (transfer-mRNA). The sequence is that of tRNA/tmRNA (uracil-C(5))-methyltransferase from Enterobacter sp. (strain 638).